The primary structure comprises 221 residues: Antigenic protein SchS34 (221 aa).

Residues Asn27, Asn69, Asn141, and Asn215 are each glycosylated (N-linked (GlcNAc...) asparagine).

Expressed in the mycelium (at protein level).

Its subcellular location is the secreted. The protein localises to the spore. The protein resides in the spore wall. It is found in the cytoplasm. This Stachybotrys chartarum (Toxic black mold) protein is Antigenic protein SchS34.